The following is a 414-amino-acid chain: Bystin (414 aa).

Residues 1–11 (MSAKRNTKLRH) show a composition bias toward basic residues. Positions 1-91 (MSAKRNTKLR…PSDDEGQADD (91 aa)) are disordered. Over residues 12 to 24 (APLEHAYVDDKSV) the composition is skewed to basic and acidic residues. The span at 25 to 34 (RRNKRSKQRG) shows a compositional bias: basic residues.

The protein belongs to the bystin family.

Its subcellular location is the nucleus. It is found in the nucleolus. Functionally, required for processing of 20S pre-rRNA precursor and biogenesis of 40S ribosomal subunits. This chain is Bystin (bysl), found in Monosiga brevicollis (Choanoflagellate).